Here is a 767-residue protein sequence, read N- to C-terminus: Protein transport protein Sec23A (767 aa).

Zn(2+)-binding residues include Cys61, Cys66, Cys85, and Cys88. Residues 634–720 (PEPVLLDSSS…EHGGSQARFL (87 aa)) form a Gelsolin-like repeat.

Belongs to the SEC23/SEC24 family. SEC23 subfamily. As to quaternary structure, COPII is composed of at least five proteins: the Sec23/24 complex, the Sec13/31 complex and Sar1.

The protein localises to the cytoplasmic vesicle. Its subcellular location is the COPII-coated vesicle membrane. It localises to the endoplasmic reticulum membrane. The protein resides in the cytoplasm. It is found in the cytosol. Component of the coat protein complex II (COPII) which promotes the formation of transport vesicles from the endoplasmic reticulum (ER). The coat has two main functions, the physical deformation of the endoplasmic reticulum membrane into vesicles and the selection of cargo molecules for their transport to the Golgi complex. The chain is Protein transport protein Sec23A from Gallus gallus (Chicken).